The primary structure comprises 248 residues: Ankyrin repeat domain-containing protein 45 (248 aa).

Acidic residues-rich tracts occupy residues 1-10 and 22-33; these read MEPEETLESE and EYEESQEAEETG. Residues 1-42 form a disordered region; the sequence is MEPEETLESESSEKSLFSSQQEYEESQEAEETGAENPLLQPT. ANK repeat units lie at residues 75–104 and 108–137; these read VGRN…NLNE and RGYT…DIEA.

It is found in the cytoplasm. The protein localises to the midbody. The protein resides in the midbody ring. Its subcellular location is the cleavage furrow. Its function is as follows. May play a role during cell division. The polypeptide is Ankyrin repeat domain-containing protein 45 (Ankrd45) (Mus musculus (Mouse)).